We begin with the raw amino-acid sequence, 180 residues long: Telokin-like protein 20 (180 aa).

Positions 112-180 (SKTDAAVHTS…KQKLDNAKQD (69 aa)) are disordered. Positions 156–165 (DFEENIDDGD) are enriched in acidic residues.

The protein is Telokin-like protein 20 (TLP20) of Lepidoptera (butterflies and moths).